The following is a 105-amino-acid chain: Serine protease inhibitor Kazal-type 6 (105 aa).

An N-terminal signal peptide occupies residues 1 to 23; that stretch reads MKVAGVFLLLSLALLCFFSGEFS. Gln24 carries the post-translational modification Pyrrolidone carboxylic acid. The region spanning 49–105 is the Kazal-like domain; that stretch reads RLFQINCGEFRDPKVFCTRESDPLCGSDGQTYGNKCAFCKALEKSSGKINLKHRGKC. 3 disulfide bridges follow: Cys55–Cys87, Cys65–Cys84, and Cys73–Cys105.

It localises to the secreted. Its function is as follows. Serine protease inhibitor selective for kallikreins. Efficiently inhibits KLK4, KLK5, KLK6, KLK7, KLK12, KLK13 and KLK14. Doesn't inhibit KLK8. The sequence is that of Serine protease inhibitor Kazal-type 6 (Spink6) from Rattus norvegicus (Rat).